The primary structure comprises 62 residues: uncharacterized protein (62 aa).

Residues 26–62 adopt a coiled-coil conformation; the sequence is YELATLYEAMQKENEEQIEQSKNKLERLRKEWIRLNG.

This is an uncharacterized protein from Bacillus subtilis (strain 168).